Consider the following 135-residue polypeptide: HTH-type transcriptional regulator CueR (135 aa).

In terms of domain architecture, HTH merR-type spans 1–69 (MNISDVAKIT…LEESGELVNL (69 aa)). Positions 4–23 (SDVAKITGLTSKAIRFYEEK) form a DNA-binding region, H-T-H motif. Cu(+)-binding residues include Cys-112 and Cys-120.

In terms of assembly, homodimer.

It localises to the cytoplasm. In terms of biological role, regulates the transcription of the copA and cueO genes. It detects cytoplasmic copper stress and activates transcription in response to increasing copper concentrations. The sequence is that of HTH-type transcriptional regulator CueR (cueR) from Escherichia coli O6:H1 (strain CFT073 / ATCC 700928 / UPEC).